The following is a 379-amino-acid chain: MSFRKTHPLIKIVNSTLVDLPSPANLSVNWNYGSLLGLVLVIQLITGIVLATRFSGHSDMSFDSVISIYQDSNYGWLLRLVHSTGASFFFLFIYLHIGRGLYYGSYVYPEVWNIGVLIYLILMGTAFLGYVLPWGQMSYWAATVITNLLSAIPWLGPTMVEWVWGGFAVGNPTLTRFFALHYLLPFVVTALVILHIFYLHIYGSSNPLGISSNTNKVSFHYYYSVKDLYVYFVFFFVFMVFTLKYGYVFMDAENFIPANPLVTPTHIQPEWYFLFAYAILRSIPNKLGGVVGLLLAVLVLFLFSVSTSKLLFSGTIYSPLARLLYWSLVSNFFLLTWLGSCPAESPYNEVALVATVTYFTFMLTMCALPHISTYLYLKS.

Helical transmembrane passes span 32–52, 76–98, 111–131, and 177–197; these read YGSL…VLAT, WLLR…LHIG, VWNI…LGYV, and FFAL…LHIF. Heme b contacts are provided by His82 and His96. His181 and His195 together coordinate heme b. His200 provides a ligand contact to a ubiquinone. A run of 4 helical transmembrane segments spans residues 223–243, 287–304, 320–340, and 348–367; these read YSVK…VFTL, LGGV…FLFS, LARL…WLGS, and NEVA…TMCA.

Belongs to the cytochrome b family. In terms of assembly, the main subunits of complex b-c1 are: cytochrome b, cytochrome c1 and the Rieske protein. The cofactor is heme b.

It localises to the mitochondrion inner membrane. In terms of biological role, component of the ubiquinol-cytochrome c reductase complex (complex III or cytochrome b-c1 complex) that is part of the mitochondrial respiratory chain. The b-c1 complex mediates electron transfer from ubiquinol to cytochrome c. Contributes to the generation of a proton gradient across the mitochondrial membrane that is then used for ATP synthesis. This is Cytochrome b (mt:Cyt-b) from Brachionus plicatilis (Marine rotifer).